Consider the following 399-residue polypeptide: MAPAADSPTLQPAQPSDLNQYRGYDHVHWYVGNAKQAATYYVTRMGFERVAYRGLETGSKAVASHVVRNGNITFILTSPLRSVEQASRFPEDEALLKEIHAHLERHGDGVKDVAFEVDCVESVFSAAVRNGAEVVSDVRTVEDEDGQIKMATIRTYGETTHTLIERSGYRGGFMPGYRMESNADATSKFLPKVVLERIDHCVGNQDWDEMERVCDYYEKILGFHRFWSVDDKDICTEFSALKSIVMASPNDIVKMPINEPAKGKKQSQIEEYVDFYNGAGVQHIALRTNNIIDAITNLKARGTEFIKVPETYYEDMKIRLKRQGLVLDEDFETLKSLDILIDFDENGYLLQLFTKHLMDRPTVFIEIIQRNNFSGFGAGNFRALFEAIEREQALRGTLI.

VOC domains are found at residues 23-166 (GYDH…LIER) and 197-355 (RIDH…LFTK). Fe cation contacts are provided by H200, H283, and E366.

This sequence belongs to the 4HPPD family. Requires Fe cation as cofactor.

The catalysed reaction is 3-(4-hydroxyphenyl)pyruvate + O2 = homogentisate + CO2. The protein operates within amino-acid degradation; L-phenylalanine degradation; acetoacetate and fumarate from L-phenylalanine: step 3/6. This Coccidioides posadasii (strain C735) (Valley fever fungus) protein is 4-hydroxyphenylpyruvate dioxygenase (TCRP).